We begin with the raw amino-acid sequence, 270 residues long: MENQPVRWRALPGLPRPPGLPAAPWLLLGVLLLPGTLRLAGGQSVTHTGLPIMASLANTAISFSCRITYPYTPQFKVFTVSYFHEDLQGQRSPKKPTNCHPGLGTENQSHTLDCQVTLVLPGASATGTYYCSVHWPHSTVRGSGTFILVRDAGYREPPQSPQKLLLFGFTGLLSVLSVVGTALLLWNKKRMRGPGKDPTRKCPDPRSASSPKQHPSESVYTALQRRETEVYACIENEDGSSPTAKQSPLSQERPHRFEDDGELNLVYENL.

Positions 1 to 42 are cleaved as a signal peptide; it reads MENQPVRWRALPGLPRPPGLPAAPWLLLGVLLLPGTLRLAGG. Residues 43 to 163 are Extracellular-facing; sequence QSVTHTGLPI…YREPPQSPQK (121 aa). The region spanning 50 to 150 is the Ig-like V-type domain; the sequence is LPIMASLANT…RGSGTFILVR (101 aa). Cys-65 and Cys-114 are oxidised to a cystine. N-linked (GlcNAc...) asparagine glycosylation is present at Asn-107. A helical membrane pass occupies residues 164 to 184; that stretch reads LLLFGFTGLLSVLSVVGTALL. Residues 185-270 are Cytoplasmic-facing; sequence LWNKKRMRGP…GELNLVYENL (86 aa). Positions 190–219 are disordered; sequence RMRGPGKDPTRKCPDPRSASSPKQHPSESV. A compositionally biased stretch (basic and acidic residues) spans 194–204; that stretch reads PGKDPTRKCPD. Residues 207-219 are compositionally biased toward polar residues; it reads SASSPKQHPSESV. The region spanning 209-237 is the ITAM domain; it reads SSPKQHPSESVYTALQRRETEVYACIENE. A phosphotyrosine mark is found at Tyr-220 and Tyr-231. A disordered region spans residues 234–262; that stretch reads IENEDGSSPTAKQSPLSQERPHRFEDDGE. The span at 239–250 shows a compositional bias: polar residues; that stretch reads GSSPTAKQSPLS.

In terms of assembly, no direct interaction with the B-cell antigen receptor (BCR). Interacts with SYK; probably involved in BCR signaling. Interacts with ZAP70. N-glycosylated. Highly expressed in neutrophils, primary monocytes, mast cells, monocytic cell lines and lymphocytes. Also expressed in spleen B and T-cells, and lung. Expressed at low level in non-immune tissue.

Its subcellular location is the cell membrane. In terms of biological role, may function in immune system as a receptor which activates via the calcineurin/NFAT-signaling pathway the downstream cytokine gene promoters. Activates the transcription of IL-13 and TNF-alpha promoters. May be involved in the regulation of B-cell, but not T-cell, development. Overexpression activates downstream effectors without ligand binding or antibody cross-linking. The chain is NFAT activation molecule 1 (NFAM1) from Homo sapiens (Human).